The following is a 534-amino-acid chain: Zinc finger protein 703-A (534 aa).

3 disordered regions span residues 1–35, 90–251, and 300–320; these read MNCS…THPV, SQIG…VAPV, and QLPG…LTGA. Composition is skewed to low complexity over residues 15–34, 115–124, and 146–155; these read QSSS…PTHP, RSSSLKLGES, and GSSAGGSADK. The span at 173-182 shows a compositional bias: polar residues; the sequence is SPSSRVSSPG. Over residues 185-200 the composition is skewed to basic and acidic residues; that stretch reads CDSKNNESQEKKEPEA. A compositionally biased stretch (polar residues) spans 204–217; sequence SLETSQANPTLTRA. Residues 218-229 are compositionally biased toward low complexity; that stretch reads SISNSSAESSQS. Positions 230–239 are enriched in polar residues; it reads GDVTPSSKSD. The segment at 406–434 adopts a C2H2-type zinc-finger fold; sequence HICNWVSASGPCDKRFATSEELLAHLRTH.

It belongs to the Elbow/Noc family.

It is found in the nucleus. Its subcellular location is the cytoplasm. Transcriptional corepressor which does not bind directly to DNA and may regulate transcription through recruitment of histone deacetylases to gene promoters. Regulates cell adhesion, migration and proliferation. Involved in specification of the lateral neural plate border (NPB). May be required for segmental gene expression during hindbrain development. The chain is Zinc finger protein 703-A (znf703-a) from Xenopus laevis (African clawed frog).